A 120-amino-acid polypeptide reads, in one-letter code: Large ribosomal subunit protein bL36m (120 aa).

It belongs to the bacterial ribosomal protein bL36 family. In terms of assembly, component of the mitochondrial ribosome large subunit (39S) which comprises a 16S rRNA and about 50 distinct proteins.

Its subcellular location is the mitochondrion. The chain is Large ribosomal subunit protein bL36m (mrpl36) from Osmerus mordax (Rainbow smelt).